The following is a 448-amino-acid chain: Probable sodium-coupled neutral amino acid transporter 6 (448 aa).

Composition is skewed to polar residues over residues 1–12 and 26–36; these read MQASDSSINTLD and LLANSPQRRSS. A disordered region spans residues 1-36; sequence MQASDSSINTLDGHQVSAGRDESTPLLANSPQRRSS. The next 5 helical transmembrane spans lie at 40–60, 69–89, 117–137, 164–184, and 185–205; these read SFGFAVFNLMNAIMGSGILGL, ILGFSALLLIVALLAAYSIHL, LVACTILIQNVGAMSSYLFII, LLIITSVCIVLPLALLPKIGF, and LGYTSSLSFFFMVYFAVVIVI. Residues C212 and C232 are joined by a disulfide bond. Residues N218 and N228 are each glycosylated (N-linked (GlcNAc...) asparagine). The next 6 membrane-spanning stretches (helical) occupy residues 244-264, 281-301, 321-341, 365-385, 388-408, and 425-445; these read AFALPTMAFSFLCHTSVLPIY, VGIALSFLIYYISALFGYLTF, VLIITVRLCILLAVLLTVPLI, ILVTLVLNIIIVLLAIYVPDM, VFGVVGSTTSTCLLFVFPGLF, and ACGLLVLGICIGACSLTLIIM.

This sequence belongs to the amino acid/polyamine transporter 2 family.

It is found in the cell membrane. Probable sodium-dependent amino acid/proton antiporter, could be a neuronal transporter for glutamate. This chain is Probable sodium-coupled neutral amino acid transporter 6 (slc38a6), found in Xenopus tropicalis (Western clawed frog).